A 723-amino-acid chain; its full sequence is Threonine--tRNA ligase, mitochondrial (723 aa).

At serine 57 the chain carries Phosphoserine. Residues 64 to 126 (RTIKISLPEG…ETDCHLRFLT (63 aa)) enclose the TGS domain.

It belongs to the class-II aminoacyl-tRNA synthetase family. As to quaternary structure, homodimer.

The protein localises to the mitochondrion matrix. It carries out the reaction tRNA(Thr) + L-threonine + ATP = L-threonyl-tRNA(Thr) + AMP + diphosphate + H(+). Its function is as follows. Catalyzes the attachment of threonine to tRNA(Thr) in a two-step reaction: threonine is first activated by ATP to form Thr-AMP and then transferred to the acceptor end of tRNA(Thr). Also edits incorrectly charged tRNA(Thr) via its editing domain. This Rattus norvegicus (Rat) protein is Threonine--tRNA ligase, mitochondrial (Tars2).